Here is a 121-residue protein sequence, read N- to C-terminus: MARFAGVDIPNEKRIVISLTYVFGVGLQTSKKVLAAAGVSEDIRTKDLTSDQEDAIRRELDGLKLEGDLRREVSLNIKRLMEIGSYRGMRHRRGLPTRGQNTKNNARTRKGPAKSIAGKKK.

The tract at residues 88–121 (GMRHRRGLPTRGQNTKNNARTRKGPAKSIAGKKK) is disordered. Basic residues predominate over residues 106-121 (ARTRKGPAKSIAGKKK).

This sequence belongs to the universal ribosomal protein uS13 family. Part of the 30S ribosomal subunit. Forms a loose heterodimer with protein S19. Forms two bridges to the 50S subunit in the 70S ribosome.

In terms of biological role, located at the top of the head of the 30S subunit, it contacts several helices of the 16S rRNA. In the 70S ribosome it contacts the 23S rRNA (bridge B1a) and protein L5 of the 50S subunit (bridge B1b), connecting the 2 subunits; these bridges are implicated in subunit movement. Contacts the tRNAs in the A and P-sites. The polypeptide is Small ribosomal subunit protein uS13 (Lactococcus lactis subsp. cremoris (strain MG1363)).